A 182-amino-acid chain; its full sequence is Large ribosomal subunit protein uL16 (182 aa).

The protein belongs to the universal ribosomal protein uL16 family.

This is Large ribosomal subunit protein uL16 from Pyrobaculum arsenaticum (strain DSM 13514 / JCM 11321 / PZ6).